The primary structure comprises 158 residues: MGVFTYENDTTSTVPPAKLFKAVVHDADLIVPKVVDSIKTVEILEGNGGPGTVKKLTFVEGGQTLYVLHKVEAIDDAKFEYNYSIVGGVGISDIVEKISFEAKLFEGPNGGSVGKMIVKYHTKGDAKPIEKEVEEGKAKGDALFKAIEAYVLANPNYN.

This sequence belongs to the BetVI family.

This is ABA-responsive protein ABR18 from Pisum sativum (Garden pea).